Reading from the N-terminus, the 213-residue chain is Thiopurine S-methyltransferase (213 aa).

S-adenosyl-L-methionine contacts are provided by Trp10, Met45, Glu66, and Arg120.

It belongs to the class I-like SAM-binding methyltransferase superfamily. TPMT family.

It is found in the cytoplasm. It carries out the reaction S-adenosyl-L-methionine + a thiopurine = S-adenosyl-L-homocysteine + a thiopurine S-methylether.. This Photobacterium profundum (strain SS9) protein is Thiopurine S-methyltransferase.